We begin with the raw amino-acid sequence, 325 residues long: Histone-lysine N-methyltransferase ATXR4 (325 aa).

Positions 1–30 (MSRLALNRYSRCFSRLKTLTTPLFFSSSAA) are cleaved as a signal peptide. The 254-residue stretch at 42–295 (PPIRVGLTES…EGEELRICYI (254 aa)) folds into the SET domain.

Belongs to the class V-like SAM-binding methyltransferase superfamily. Histone-lysine methyltransferase family. TRX/MLL subfamily.

The protein localises to the nucleus. It catalyses the reaction L-lysyl-[histone] + S-adenosyl-L-methionine = N(6)-methyl-L-lysyl-[histone] + S-adenosyl-L-homocysteine + H(+). Functionally, histone methyltransferase. The protein is Histone-lysine N-methyltransferase ATXR4 (ATXR4) of Arabidopsis thaliana (Mouse-ear cress).